The following is a 249-amino-acid chain: Adenosylcobinamide-GDP ribazoletransferase (249 aa).

The next 6 helical transmembrane spans lie at 32–52 (MVAF…TWFG), 53–73 (ATWL…WGAI), 107–127 (IGTM…LFVL), 136–156 (ALIV…FWFP), 190–210 (LLWW…IIIA), and 224–244 (TYGA…AALV).

It belongs to the CobS family. Mg(2+) serves as cofactor.

It localises to the cell membrane. The catalysed reaction is alpha-ribazole + adenosylcob(III)inamide-GDP = adenosylcob(III)alamin + GMP + H(+). It carries out the reaction alpha-ribazole 5'-phosphate + adenosylcob(III)inamide-GDP = adenosylcob(III)alamin 5'-phosphate + GMP + H(+). The protein operates within cofactor biosynthesis; adenosylcobalamin biosynthesis; adenosylcobalamin from cob(II)yrinate a,c-diamide: step 7/7. Joins adenosylcobinamide-GDP and alpha-ribazole to generate adenosylcobalamin (Ado-cobalamin). Also synthesizes adenosylcobalamin 5'-phosphate from adenosylcobinamide-GDP and alpha-ribazole 5'-phosphate. The polypeptide is Adenosylcobinamide-GDP ribazoletransferase (Herpetosiphon aurantiacus (strain ATCC 23779 / DSM 785 / 114-95)).